The sequence spans 399 residues: Putative gustatory receptor 59e (399 aa).

Over Met-1 to Thr-33 the chain is Cytoplasmic. The helical transmembrane segment at Leu-34–Phe-54 threads the bilayer. The Extracellular segment spans residues Thr-55–Leu-65. Residues Tyr-66–Leu-86 form a helical membrane-spanning segment. Residues Asn-87–Arg-120 are Cytoplasmic-facing. Residues Thr-121–Val-141 traverse the membrane as a helical segment. Residues Asn-142–Asp-206 lie on the Extracellular side of the membrane. Residues Ala-207 to Ile-227 form a helical membrane-spanning segment. The Cytoplasmic segment spans residues Glu-228 to Leu-250. The helical transmembrane segment at Tyr-251–Phe-271 threads the bilayer. Topologically, residues Asn-272–Ser-282 are extracellular. Residues Val-283–Leu-303 form a helical membrane-spanning segment. Over Ser-304–Ser-361 the chain is Cytoplasmic. The chain crosses the membrane as a helical span at residues Leu-362–Gly-382. N-linked (GlcNAc...) asparagine glycosylation is found at Asn-383 and Asn-392. Residues Asn-383–Val-399 are Extracellular-facing.

Belongs to the insect chemoreceptor superfamily. Gustatory receptor (GR) family. Gr10a subfamily. Expressed in the adult labellar chemosensory neurons. In larvae, is expressed in neurons of the terminal external chemosensory organ.

Its subcellular location is the cell membrane. Its function is as follows. Probable gustatory receptor which mediates acceptance or avoidance behavior, depending on its substrates. In Drosophila melanogaster (Fruit fly), this protein is Putative gustatory receptor 59e (Gr59e).